A 274-amino-acid chain; its full sequence is Large ribosomal subunit protein uL2 (274 aa).

The interval 223–274 (VVMNPVDHPHGGGEGRTSGGRHPVSPWGVPTKGYKTRSNKRTDKYIVRRRNK) is disordered.

The protein belongs to the universal ribosomal protein uL2 family. As to quaternary structure, part of the 50S ribosomal subunit. Forms a bridge to the 30S subunit in the 70S ribosome.

In terms of biological role, one of the primary rRNA binding proteins. Required for association of the 30S and 50S subunits to form the 70S ribosome, for tRNA binding and peptide bond formation. It has been suggested to have peptidyltransferase activity; this is somewhat controversial. Makes several contacts with the 16S rRNA in the 70S ribosome. In Vibrio cholerae serotype O1 (strain M66-2), this protein is Large ribosomal subunit protein uL2.